The chain runs to 144 residues: Transcription antitermination protein NusB (144 aa).

This sequence belongs to the NusB family.

In terms of biological role, involved in transcription antitermination. Required for transcription of ribosomal RNA (rRNA) genes. Binds specifically to the boxA antiterminator sequence of the ribosomal RNA (rrn) operons. This is Transcription antitermination protein NusB from Leifsonia xyli subsp. xyli (strain CTCB07).